We begin with the raw amino-acid sequence, 38 residues long: MVEALLSGIVLGSIPITLAGSFVTAYPQYRRGDQLDLR.

The helical transmembrane segment at 5–25 (LLSGIVLGSIPITLAGSFVTA) threads the bilayer.

This sequence belongs to the PetG family. In terms of assembly, the 4 large subunits of the cytochrome b6-f complex are cytochrome b6, subunit IV (17 kDa polypeptide, PetD), cytochrome f and the Rieske protein, while the 4 small subunits are PetG, PetL, PetM and PetN. The complex functions as a dimer.

The protein localises to the plastid. It localises to the chloroplast thylakoid membrane. In terms of biological role, component of the cytochrome b6-f complex, which mediates electron transfer between photosystem II (PSII) and photosystem I (PSI), cyclic electron flow around PSI, and state transitions. PetG is required for either the stability or assembly of the cytochrome b6-f complex. The chain is Cytochrome b6-f complex subunit 5 from Huperzia lucidula (Shining clubmoss).